Reading from the N-terminus, the 138-residue chain is MAQKLKLEMVTPAAQVLIEEVDEIAAPGSLGQFGVLPGHTPLLTTLQVGEFSYRKGSDVYYLAVNWGYVEVAEDRVLVLVETAETQDHIDLARAKAALGRAEARLRELTPADKEYHNMQAALQRAMVRIQVAGRGGRG.

The protein belongs to the ATPase epsilon chain family. As to quaternary structure, F-type ATPases have 2 components, CF(1) - the catalytic core - and CF(0) - the membrane proton channel. CF(1) has five subunits: alpha(3), beta(3), gamma(1), delta(1), epsilon(1). CF(0) has three main subunits: a, b and c.

It is found in the cell inner membrane. Functionally, produces ATP from ADP in the presence of a proton gradient across the membrane. This Syntrophotalea carbinolica (strain DSM 2380 / NBRC 103641 / GraBd1) (Pelobacter carbinolicus) protein is ATP synthase epsilon chain 1.